Here is a 955-residue protein sequence, read N- to C-terminus: Glycine dehydrogenase (decarboxylating) (955 aa).

Lys705 carries the post-translational modification N6-(pyridoxal phosphate)lysine.

The protein belongs to the GcvP family. In terms of assembly, the glycine cleavage system is composed of four proteins: P, T, L and H. Pyridoxal 5'-phosphate serves as cofactor.

It carries out the reaction N(6)-[(R)-lipoyl]-L-lysyl-[glycine-cleavage complex H protein] + glycine + H(+) = N(6)-[(R)-S(8)-aminomethyldihydrolipoyl]-L-lysyl-[glycine-cleavage complex H protein] + CO2. Its function is as follows. The glycine cleavage system catalyzes the degradation of glycine. The P protein binds the alpha-amino group of glycine through its pyridoxal phosphate cofactor; CO(2) is released and the remaining methylamine moiety is then transferred to the lipoamide cofactor of the H protein. The sequence is that of Glycine dehydrogenase (decarboxylating) from Aliivibrio fischeri (strain MJ11) (Vibrio fischeri).